The primary structure comprises 345 residues: Metal-dependent phosphohydrolase cns2 (345 aa).

In terms of domain architecture, HD spans 70 to 171 (RLEHSVGAFI…QLCADRLDYA (102 aa)).

As to quaternary structure, interacts with cns1.

Its subcellular location is the lipid droplet. Its pathway is secondary metabolite biosynthesis. Metal-dependent phosphohydrolase; part of the gene cluster that mediates the biosynthesis of cordycepin (COR) and pentostatin (PTN), two adenosine analogs with related bioactivity profiles as both mimic adenosine and can inhibit some of the processes that are adenosine dependent. Within the pathway, cns2 catalyzes dephosphorylation of 3'-AMP to produce 2'-carbonyl-3'-deoxyadenosine (2'-C-3'-dA). The first step of cordycepin biosynthesis involves hydroxyl phosphorylation of the 3'-OH position on adenosine to produce adenosine-3'-monophosphate (3'-AMP), catalyzed by kinase activity of cns3. Next, 3'-AMP is dephosphorylated to 2'-carbonyl-3'-deoxyadenosine by cns2, which is finally converted to cordycepin (3'-deoxyadenosine) by the oxidoreductase cns1. The sequence is that of Metal-dependent phosphohydrolase cns2 from Cordyceps militaris (strain CM01) (Caterpillar fungus).